The chain runs to 732 residues: Protein DIA2 (732 aa).

3 TPR repeats span residues Val-15–Tyr-48, Ile-78–Asn-111, and Lys-113–Asp-145. The 48-residue stretch at Thr-204–Phe-251 folds into the F-box domain. Residue Ser-393 is modified to Phosphoserine. 7 LRR repeats span residues Leu-425 to Gly-449, Phe-480 to Phe-505, Trp-509 to Gln-532, Leu-550 to Gln-574, Gly-579 to Thr-602, Leu-616 to Ser-637, and Leu-645 to Lys-669.

Belongs to the DIA2 family. Component of the SCF(DIA2) complex containing CDC53, SKP1, RBX1 and DIA2. Interacts with SKP1.

It is found in the nucleus. Functionally, F-box protein component of a SCF (SKP1-CUL1-F-box protein) E3 ubiquitin-protein ligase complex which mediates the ubiquitination and subsequent proteasomal degradation of target proteins. Probably recognizes and binds to phosphorylated target proteins. The SCF(DIA2) complex is specifically involved in the pheromone induced degradation of phosphorylated TEC1. The SCF(DIA2) complex binds to DNA replication origins. Involved in DNA replication, genome stability, and the control of cell cycle, probably through its association to replication origins to facilitate the ubiquitination of another origin-binding protein. Required for invasive growth and growth under alkaline conditions. This is Protein DIA2 (DIA2) from Saccharomyces cerevisiae (strain ATCC 204508 / S288c) (Baker's yeast).